The primary structure comprises 156 residues: Putative increased recombination centers protein 11 (156 aa).

The chain crosses the membrane as a helical span at residues 20-42 (AALGATCLLHYLTTSLSIRFFFH).

The protein resides in the membrane. This chain is Putative increased recombination centers protein 11 (IRC11), found in Saccharomyces cerevisiae (strain ATCC 204508 / S288c) (Baker's yeast).